Reading from the N-terminus, the 1279-residue chain is Myosin-1 (1279 aa).

Positions 1–12 are enriched in basic residues; it reads MAIVKRGGRTRA. Residues 1–25 are disordered; that stretch reads MAIVKRGGRTRAKQQQAPAKVNNGL. The Myosin motor domain occupies 48–736; it reads VGVSDLTLLS…TLFALEDMRD (689 aa). 141–148 serves as a coordination point for ATP; it reads GESGAGKT. The residue at position 371 (S371) is a Phosphoserine. An actin-binding region spans residues 419 to 502; the sequence is SIGILDIYGF…PGLFAALNDS (84 aa). IQ domains are found at residues 740-760 and 761-786; these read HNMAARIQRAWRRYIKRKEDA and AKTIQRAWRMKNHGNQFEQFRDYGNS. The TH1 domain occupies 794-984; it reads RRRFSMLGSR…SGTVTVNQGL (191 aa). Polar residues-rich tracts occupy residues 980 to 989 and 1018 to 1027; these read VNQGLPPTSK and AFQSQPTASY. Disordered stretches follow at residues 980-1001, 1014-1132, 1189-1216, and 1253-1279; these read VNQGLPPTSKNPKRPRAKLGKV, LAQP…PKHP, SPSASAATQSYAPTTASSNPVSTASSNT, and LADALKKRQGVTRDDSDAEDDDDDDDW. 2 stretches are compositionally biased toward low complexity: residues 1038 to 1056 and 1067 to 1095; these read TQLYATQHQPQQPQVPTRT and STQTAAQVSTLPQAARKPAAPARPAKKIA. Positions 1116–1126 are enriched in pro residues; sequence APPPPPPPPAL. The 61-residue stretch at 1129-1189 folds into the SH3 domain; the sequence is PKHPTYRAMY…PIDYLQEESS (61 aa). The span at 1189 to 1209 shows a compositional bias: polar residues; sequence SPSASAATQSYAPTTASSNPV. Positions 1268–1279 are enriched in acidic residues; sequence SDAEDDDDDDDW.

The protein belongs to the TRAFAC class myosin-kinesin ATPase superfamily. Myosin family. Phosphorylation of the TEDS site (Ser-371) is required for the polarization of the actin cytoskeleton. Phosphorylation probably activates the myosin-I ATPase activity.

The protein resides in the cytoplasm. Its subcellular location is the cytoskeleton. It localises to the actin patch. In terms of biological role, type-I myosin implicated in the organization of the actin cytoskeleton. Required for proper actin cytoskeleton polarization. At the cell cortex, assembles in patch-like structures together with proteins from the actin-polymerizing machinery and promotes actin assembly. Functions as actin nucleation-promoting factor (NPF) for the Arp2/3 complex. This Lodderomyces elongisporus (strain ATCC 11503 / CBS 2605 / JCM 1781 / NBRC 1676 / NRRL YB-4239) (Yeast) protein is Myosin-1 (MYO1).